The sequence spans 505 residues: Glutamate--tRNA ligase (505 aa).

The short motif at 12-22 (PSPTGDPHVGT) is the 'HIGH' region element. Residues 253-257 (KLSKR) carry the 'KMSKS' region motif. Position 256 (Lys-256) interacts with ATP.

It belongs to the class-I aminoacyl-tRNA synthetase family. Glutamate--tRNA ligase type 1 subfamily. Monomer.

It is found in the cytoplasm. The enzyme catalyses tRNA(Glu) + L-glutamate + ATP = L-glutamyl-tRNA(Glu) + AMP + diphosphate. Catalyzes the attachment of glutamate to tRNA(Glu) in a two-step reaction: glutamate is first activated by ATP to form Glu-AMP and then transferred to the acceptor end of tRNA(Glu). The polypeptide is Glutamate--tRNA ligase (Chlamydia abortus (strain DSM 27085 / S26/3) (Chlamydophila abortus)).